Consider the following 977-residue polypeptide: Short transient receptor potential channel 4 (977 aa).

Residues 1 to 324 (MAQFYYKRNV…YDEFPGWRRR (324 aa)) lie on the Cytoplasmic side of the membrane. 4 ANK repeats span residues 29-60 (LSPSEKAYLNAVEKGDYASVKKSLEEAEIYFK), 71-93 (RTALLIAIENENLELIELLLSFN), 96-118 (VGDALLHAIRKEVVGAVELLLNH), and 141-165 (PDITPIILAAHTNNYEIIKLLVQKG). Residues H172, C176, C178, and C181 each contribute to the Zn(2+) site. Residues 223 to 260 (LSWELQELSKVENEFKSEYEELSRQCKQFAKDLLDQTR) adopt a coiled-coil conformation. Residues 325-359 (HWAVKMVTCFIIGLLFPVFSVCYLIAPKSPLGLFI) constitute an intramembrane region (discontinuously helical). Residues 360-362 (RKP) lie on the Cytoplasmic side of the membrane. A helical transmembrane segment spans residues 363–383 (FIKFICHTASYLTFLFLLLLA). Over 384–403 (SQHIDRSDLNRQGPPPTIVE) the chain is Extracellular. A helical transmembrane segment spans residues 404–418 (WMILPWVLGFIWGEI). Ca(2+) is bound by residues E417, Q420, N435, and D438. The Cytoplasmic segment spans residues 419 to 432 (KQMWDGGLQDYIHD). The chain crosses the membrane as a helical span at residues 433–453 (WWNLMDFVMNSLYLATISLKI). Residues 454-475 (VAFVKYSALNPRESWDMWHPTL) are Extracellular-facing. Residues 476 to 498 (VAEALFAIANIFSSLRLISLFTA) traverse the membrane as a helical segment. The Cytoplasmic portion of the chain corresponds to 499 to 511 (NSHLGPLQISLGR). Residues 512–534 (MLLDILKFLFIYCLVLLAFANGL) form a helical membrane-spanning segment. Topologically, residues 535 to 599 (NQLYFYYEET…HEFTDFVGAT (65 aa)) are extracellular. A disulfide bond links C549 and C554. A helical transmembrane segment spans residues 600 to 620 (MFGTYNVISLVVLLNMLIAMM). Residues 615-977 (MLIAMMNNSY…AHEDYVTTRL (363 aa)) are interaction with ITPR1, ITPR2 and ITPR3. Topologically, residues 621 to 977 (NNSYQLIADH…AHEDYVTTRL (357 aa)) are cytoplasmic. The segment at 767–790 (AASSASSADSDEKSHSEGNGKDKR) is disordered. The segment covering 776–787 (SDEKSHSEGNGK) has biased composition (basic and acidic residues). Phosphotyrosine; by FYN occurs at positions 959 and 972. Positions 975–977 (TRL) are PDZ-binding domain.

This sequence belongs to the transient receptor (TC 1.A.4) family. STrpC subfamily. TRPC4 sub-subfamily. As to quaternary structure, homotetramer. Heterotetramer with TRPC1 and/or TRPC5. Forms a heteromeric ion channel with TRPC1, with a 1:3 TRPC1:TRPC4 stoichiometry. Interacts with TRPC4AP. Isoform alpha but not isoform beta interacts with ITPR1, ITPR2 and ITPR3. Interacts with NHERF1. Interacts with MX1 and RNF24. Interacts (via CIRB domain) with SESTD1 (via the spectrin 1 repeat) and SPTBN5 (via C-terminus). Interacts with CDH5 and CTNNB1. Interacts (via protein 4.1-binding domain) with EPB41L2. Interacts with PLSCR1.

Its subcellular location is the cell membrane. The enzyme catalyses Ca(2+)(in) = Ca(2+)(out). The catalysed reaction is Na(+)(in) = Na(+)(out). It carries out the reaction Li(+)(in) = Li(+)(out). It catalyses the reaction Cs(+)(in) = Cs(+)(out). With respect to regulation, may be operated by a phosphatidylinositol second messenger system activated by receptor tyrosine kinases or G-protein coupled receptors. May be activated by intracellular calcium store depletion. Forms a receptor-activated non-selective calcium permeant cation channel. Acts as a cell-cell contact-dependent endothelial calcium entry channel. Forms a homomeric ion channel or a heteromeric ion channel with TRPC1; the heteromeric ion channel has reduced calcium permeability compared to the homomeric channel. Also permeable to monovalent ions including sodium, lithium and cesium ions. Functionally, forms a non-selective a receptor-activated calcium permeant cation channel. Probably is operated by a phosphatidylinositol second messenger system activated by receptor tyrosine kinases or G-protein coupled receptors. In Rattus norvegicus (Rat), this protein is Short transient receptor potential channel 4 (Trpc4).